The sequence spans 277 residues: Shikimate dehydrogenase (NADP(+)) (277 aa).

Residues 15 to 17 (SLS) and Thr-62 contribute to the shikimate site. The active-site Proton acceptor is the Lys-66. 2 residues coordinate shikimate: Asn-87 and Asp-102. NADP(+) contacts are provided by residues 127 to 131 (GAGGA), 151 to 156 (NRTVDK), and Ile-219. Residue Tyr-221 participates in shikimate binding. Gly-242 contacts NADP(+).

Belongs to the shikimate dehydrogenase family. In terms of assembly, homodimer.

It carries out the reaction shikimate + NADP(+) = 3-dehydroshikimate + NADPH + H(+). Its pathway is metabolic intermediate biosynthesis; chorismate biosynthesis; chorismate from D-erythrose 4-phosphate and phosphoenolpyruvate: step 4/7. Its function is as follows. Involved in the biosynthesis of the chorismate, which leads to the biosynthesis of aromatic amino acids. Catalyzes the reversible NADPH linked reduction of 3-dehydroshikimate (DHSA) to yield shikimate (SA). This Bacillus anthracis (strain CDC 684 / NRRL 3495) protein is Shikimate dehydrogenase (NADP(+)).